We begin with the raw amino-acid sequence, 362 residues long: Isopentenyl-diphosphate delta-isomerase (362 aa).

6–7 (RK) provides a ligand contact to substrate. Residues 65-67 (SIT), Ser95, and Asn124 each bind FMN. Residue 95–97 (SQR) participates in substrate binding. A substrate-binding site is contributed by Gln158. Position 159 (Glu159) interacts with Mg(2+). Residues Lys189, Thr219, 269–271 (GVR), and 290–291 (AL) each bind FMN.

The protein belongs to the IPP isomerase type 2 family. In terms of assembly, homooctamer. Dimer of tetramers. FMN serves as cofactor. It depends on NADPH as a cofactor. Mg(2+) is required as a cofactor.

It is found in the cytoplasm. It catalyses the reaction isopentenyl diphosphate = dimethylallyl diphosphate. Functionally, involved in the biosynthesis of isoprenoids. Catalyzes the 1,3-allylic rearrangement of the homoallylic substrate isopentenyl (IPP) to its allylic isomer, dimethylallyl diphosphate (DMAPP). The chain is Isopentenyl-diphosphate delta-isomerase from Methanococcoides burtonii (strain DSM 6242 / NBRC 107633 / OCM 468 / ACE-M).